The primary structure comprises 361 residues: Chorismate synthase (361 aa).

Residues Arg-48 and Arg-54 each contribute to the NADP(+) site. FMN contacts are provided by residues 125–127, 238–239, Gly-278, 293–297, and Arg-319; these read RSS, NA, and KPTSS.

This sequence belongs to the chorismate synthase family. As to quaternary structure, homotetramer. The cofactor is FMNH2.

It carries out the reaction 5-O-(1-carboxyvinyl)-3-phosphoshikimate = chorismate + phosphate. It participates in metabolic intermediate biosynthesis; chorismate biosynthesis; chorismate from D-erythrose 4-phosphate and phosphoenolpyruvate: step 7/7. Catalyzes the anti-1,4-elimination of the C-3 phosphate and the C-6 proR hydrogen from 5-enolpyruvylshikimate-3-phosphate (EPSP) to yield chorismate, which is the branch point compound that serves as the starting substrate for the three terminal pathways of aromatic amino acid biosynthesis. This reaction introduces a second double bond into the aromatic ring system. The chain is Chorismate synthase from Cronobacter sakazakii (strain ATCC BAA-894) (Enterobacter sakazakii).